The following is an 87-amino-acid chain: Lantipeptide prochlorosin 3.3 (87 aa).

Positions 1–64 are excised as a propeptide; sequence MSEEQLKAFI…DEELEAASGG (64 aa). Thr-67 is modified (2,3-didehydrobutyrine). Residues 75-85 constitute a cross-link (beta-methyllanthionine (Thr-Cys)); the sequence is TAGCYGGTKMC. A cross-link (beta-methyllanthionine (Cys-Thr)) is located at residues 78–82; sequence CYGGT.

Cross-links are proved in vitro, when coepressed in E.coli with the ProcM lanthionine synthetase. Post-translationally, the beta-methyllanthionine residues have a DL configuration (with 2S,3S,6R stereochemistry). In terms of processing, maturation of prochlorosin involves the enzymatic conversion of Thr, and Ser into dehydrated AA and the formation of thioether bonds with cysteines. This is followed by membrane translocation and cleavage of the modified precursor.

Its subcellular location is the secreted. In terms of biological role, lanthionine-containing peptide (lantipeptide) with unknown function. Does not show antibiotic activity against Lactococcus lactis 117 and Bacillus subtilis 6633 bacteria. Organisms that produce this peptide live in oligotrophic environments at very dilute concentrations, suggesting this peptide is not secreted to influence other bacteria. This Prochlorococcus marinus (strain MIT 9313) protein is Lantipeptide prochlorosin 3.3.